We begin with the raw amino-acid sequence, 309 residues long: Taste receptor type 2 member 20 (309 aa).

Topologically, residues 1 to 6 (MMSFLH) are extracellular. Residues 7–27 (IVFSILVVVAFILGNFANGFI) traverse the membrane as a helical segment. Over 28 to 46 (ALINFIAWVKRQKISSADQ) the chain is Cytoplasmic. The helical transmembrane segment at 47 to 67 (IIAALAVSRVGLLWVILLHWY) threads the bilayer. Residues 68-79 (STVLNPTSSNLK) lie on the Extracellular side of the membrane. The helical transmembrane segment at 80–100 (VIIFISNAWAVTNHFSIWLAT) threads the bilayer. At 101–125 (SLSIFYLLKIVNFSRLIFHHLKRKA) the chain is on the cytoplasmic side. A helical membrane pass occupies residues 126-146 (KSVVLVIVLGSLFFLVCXLVM). The Extracellular portion of the chain corresponds to 147–178 (KNTYINVWTEECEGNVTWKIKLRNAMHLSNLT). The helical transmembrane segment at 179–199 (VAMLANLIPFTLTLISFLLLI) threads the bilayer. Residues 200–229 (YSLCKHLKKMQLHGKGSQDPSTKIHIKALQ) are Cytoplasmic-facing. Residues 230 to 250 (TVTSFLILLAIYFLCLITSFW) traverse the membrane as a helical segment. Residues 251 to 259 (NSKMRPKEI) are Extracellular-facing. The chain crosses the membrane as a helical span at residues 260-280 (VLMLCQAFGIIYPSFHSFILI). Residues 281-309 (WGNKTLKQTFLSVLWQVTCWAKGQNQSTP) are Cytoplasmic-facing.

This sequence belongs to the G-protein coupled receptor T2R family.

The protein resides in the membrane. Receptor that may play a role in the perception of bitterness and is gustducin-linked. May play a role in sensing the chemical composition of the gastrointestinal content. The activity of this receptor may stimulate alpha gustducin, mediate PLC-beta-2 activation and lead to the gating of TRPM5. The protein is Taste receptor type 2 member 20 (TAS2R20) of Pan troglodytes (Chimpanzee).